Reading from the N-terminus, the 495-residue chain is MSDLSGEDVTVVGGGIGGLSAACYLADAGADVSLLEKNEQLGGRASRLEVDGFRFDMGPSWYLMPDVFERFFAYFGKEPRDYYDLQRLDPHYRIFFKDGDQIDVTGDNDEMAQKFEEYEPGAGEAFEEYLSTSERHYETAMNKFVYQDRSELRDWVDLDVMTAAPVGLQLIGTMQSHVEDYFEHPKLQQIMQYTLVFLGGSPRTTPALYNMMSHVDFNLGVYYPDGGVGAVVDGLVELGEELGVTYETDAEVEEISRRKEGFLVETVHGDTTHPDEVVVNADYAHAERELLPDHERQYDDDYWDDKTYAPSAFLMYMGVEGDVEPLEHHTLVLPTDWDPHFDDIFDEPAWPDDPAYYLCVPSKTDDSVAPDGHSNLFVLVPIAPGLHDGDEIRQEYREKVLADIADNTGVDLRDRIVYEKQFAVSDFGERYNATEGTALGLAHTLRQTALLRPNNRSSAVDGLYFTGSFTTPGIGVPMCLISGEHTAEALIEDIA.

This sequence belongs to the carotenoid/retinoid oxidoreductase family.

The catalysed reaction is dihydroisopentenyldehydrorhodopin + A = isopentenyldehydrorhodopin + AH2. The enzyme catalyses dihydrobisanhydrobacterioruberin + A = bisanhydrobacterioruberin + AH2. Its pathway is carotenoid biosynthesis. Involved in the biosynthesis of the acyclic C50 carotenoid bacterioruberin (BR). CrtD is involved in the desaturation reactions that form double bonds at C-3,4 of dihydroisopentenyldehydrorhodopin (DH-IDR) and C-3',4' of dihydrobisanhydrobacterioruberin (DH-BABR) to yield isopentenyld ehydrorhodopin (IDR) and bisanhydrobacterioruberin (BABR), respectively. In Haloarcula japonica (strain ATCC 49778 / DSM 6131 / JCM 7785 / NBRC 101032 / NCIMB 13157 / TR-1), this protein is Carotenoid 3,4-desaturase.